A 220-amino-acid polypeptide reads, in one-letter code: Phosphatidylserine decarboxylase proenzyme (220 aa).

The active-site Schiff-base intermediate with substrate; via pyruvic acid is the S188. A Pyruvic acid (Ser); by autocatalysis modification is found at S188.

It belongs to the phosphatidylserine decarboxylase family. PSD-A subfamily. As to quaternary structure, heterodimer of a large membrane-associated beta subunit and a small pyruvoyl-containing alpha subunit. The cofactor is pyruvate. Is synthesized initially as an inactive proenzyme. Formation of the active enzyme involves a self-maturation process in which the active site pyruvoyl group is generated from an internal serine residue via an autocatalytic post-translational modification. Two non-identical subunits are generated from the proenzyme in this reaction, and the pyruvate is formed at the N-terminus of the alpha chain, which is derived from the carboxyl end of the proenzyme. The post-translation cleavage follows an unusual pathway, termed non-hydrolytic serinolysis, in which the side chain hydroxyl group of the serine supplies its oxygen atom to form the C-terminus of the beta chain, while the remainder of the serine residue undergoes an oxidative deamination to produce ammonia and the pyruvoyl prosthetic group on the alpha chain.

It localises to the cell membrane. The enzyme catalyses a 1,2-diacyl-sn-glycero-3-phospho-L-serine + H(+) = a 1,2-diacyl-sn-glycero-3-phosphoethanolamine + CO2. Its pathway is phospholipid metabolism; phosphatidylethanolamine biosynthesis; phosphatidylethanolamine from CDP-diacylglycerol: step 2/2. Functionally, catalyzes the formation of phosphatidylethanolamine (PtdEtn) from phosphatidylserine (PtdSer). This chain is Phosphatidylserine decarboxylase proenzyme, found in Parabacteroides distasonis (strain ATCC 8503 / DSM 20701 / CIP 104284 / JCM 5825 / NCTC 11152).